A 222-amino-acid polypeptide reads, in one-letter code: Eukaryotic translation initiation factor 3 subunit K (222 aa).

A PCI domain is found at 46–208; the sequence is YDLEANLAVL…KIKTKNITEK (163 aa).

This sequence belongs to the eIF-3 subunit K family. Component of the eukaryotic translation initiation factor 3 (eIF-3) complex. The eIF-3 complex interacts with pix.

The protein localises to the cytoplasm. In terms of biological role, component of the eukaryotic translation initiation factor 3 (eIF-3) complex, which is involved in protein synthesis of a specialized repertoire of mRNAs and, together with other initiation factors, stimulates binding of mRNA and methionyl-tRNAi to the 40S ribosome. The eIF-3 complex specifically targets and initiates translation of a subset of mRNAs involved in cell proliferation. The protein is Eukaryotic translation initiation factor 3 subunit K of Drosophila sechellia (Fruit fly).